Reading from the N-terminus, the 274-residue chain is 4-diphosphocytidyl-2-C-methyl-D-erythritol kinase (274 aa).

The active site involves Lys14. Residue 94 to 104 participates in ATP binding; the sequence is PMQAGLGGGSS. Asp134 is an active-site residue.

It belongs to the GHMP kinase family. IspE subfamily.

It catalyses the reaction 4-CDP-2-C-methyl-D-erythritol + ATP = 4-CDP-2-C-methyl-D-erythritol 2-phosphate + ADP + H(+). The protein operates within isoprenoid biosynthesis; isopentenyl diphosphate biosynthesis via DXP pathway; isopentenyl diphosphate from 1-deoxy-D-xylulose 5-phosphate: step 3/6. Catalyzes the phosphorylation of the position 2 hydroxy group of 4-diphosphocytidyl-2C-methyl-D-erythritol. This Thermosipho melanesiensis (strain DSM 12029 / CIP 104789 / BI429) protein is 4-diphosphocytidyl-2-C-methyl-D-erythritol kinase.